The following is a 280-amino-acid chain: Manganese import system permease protein ScaB (280 aa).

The next 8 helical transmembrane spans lie at 18-38, 61-81, 94-114, 139-159, 174-194, 196-216, 222-242, and 246-266; these read ALITAIAIGIVAGAVGCFIIL, ILGINFFIGAIVFGLLASILI, TAIGITFSSFLALGVILIGVA, TIGVGVTVLLVICLLFRPLLL, VKIYHYLLMVLLTLVSVTAMQ, VGTILIVAMLITPAATAYLYA, MMLLSSSLGALASILGLFIGY, and IAVGSCIVLTSAVFFLISFFI.

It belongs to the ABC-3 integral membrane protein family.

The protein localises to the cell membrane. In terms of biological role, part of an ABC transporter complex involved in manganese import. In Streptococcus parasanguinis, this protein is Manganese import system permease protein ScaB.